The primary structure comprises 418 residues: Gamma-glutamyl phosphate reductase (418 aa).

This sequence belongs to the gamma-glutamyl phosphate reductase family.

The protein localises to the cytoplasm. It catalyses the reaction L-glutamate 5-semialdehyde + phosphate + NADP(+) = L-glutamyl 5-phosphate + NADPH + H(+). It functions in the pathway amino-acid biosynthesis; L-proline biosynthesis; L-glutamate 5-semialdehyde from L-glutamate: step 2/2. In terms of biological role, catalyzes the NADPH-dependent reduction of L-glutamate 5-phosphate into L-glutamate 5-semialdehyde and phosphate. The product spontaneously undergoes cyclization to form 1-pyrroline-5-carboxylate. The chain is Gamma-glutamyl phosphate reductase from Lacticaseibacillus casei (strain BL23) (Lactobacillus casei).